The following is a 664-amino-acid chain: Macoilin (664 aa).

A run of 4 helical transmembrane segments spans residues 28–48 (TFLYLKFLVVWALVLLADFVL), 75–95 (AFSVFFVCVAFTSNIICLLFI), 120–140 (VCLPTVSLWILFVYIEAAIRF), and 154–174 (FAAHCIGYPVVTLGFGFKSYV). The span at 253 to 265 (REKGKEKDKDAKK) shows a compositional bias: basic and acidic residues. Positions 253-274 (REKGKEKDKDAKKHNLGINNNN) are disordered. S305 is modified (phosphoserine). The span at 320–348 (KNYKNASGVVNSSPRSHSATNGSIPSSSS) shows a compositional bias: polar residues. The interval 320 to 367 (KNYKNASGVVNSSPRSHSATNGSIPSSSSKNEKKQKCTSKSPSAHKDL) is disordered. An N-linked (GlcNAc...) asparagine glycan is attached at N324. S332 is modified (phosphoserine). N-linked (GlcNAc...) asparagine glycans are attached at residues N340 and N452. Residues 630–664 (TSPLSPVSPHYSSKFVETSPSGLDPNASVYQPLKK) form a disordered region. Residues S631 and S634 each carry the phosphoserine modification. N-linked (GlcNAc...) asparagine glycosylation occurs at N655.

It belongs to the macoilin family.

The protein resides in the rough endoplasmic reticulum membrane. It localises to the nucleus membrane. Functionally, plays a role in the regulation of neuronal activity. In Sus scrofa (Pig), this protein is Macoilin (MACO1).